We begin with the raw amino-acid sequence, 211 residues long: Uracil phosphoribosyltransferase (211 aa).

5-phospho-alpha-D-ribose 1-diphosphate contacts are provided by residues Arg79, Arg104, and Asp131 to Ser139. Uracil is bound by residues Ile196 and Gly201–Ala203. 5-phospho-alpha-D-ribose 1-diphosphate is bound at residue Asp202.

The protein belongs to the UPRTase family. Requires Mg(2+) as cofactor.

The catalysed reaction is UMP + diphosphate = 5-phospho-alpha-D-ribose 1-diphosphate + uracil. The protein operates within pyrimidine metabolism; UMP biosynthesis via salvage pathway; UMP from uracil: step 1/1. Its activity is regulated as follows. Allosterically activated by GTP. Functionally, catalyzes the conversion of uracil and 5-phospho-alpha-D-ribose 1-diphosphate (PRPP) to UMP and diphosphate. The chain is Uracil phosphoribosyltransferase from Lactococcus lactis subsp. cremoris (strain MG1363).